Here is a 571-residue protein sequence, read N- to C-terminus: Proline--tRNA ligase (571 aa).

The protein belongs to the class-II aminoacyl-tRNA synthetase family. ProS type 1 subfamily. As to quaternary structure, homodimer.

It is found in the cytoplasm. The catalysed reaction is tRNA(Pro) + L-proline + ATP = L-prolyl-tRNA(Pro) + AMP + diphosphate. Functionally, catalyzes the attachment of proline to tRNA(Pro) in a two-step reaction: proline is first activated by ATP to form Pro-AMP and then transferred to the acceptor end of tRNA(Pro). As ProRS can inadvertently accommodate and process non-cognate amino acids such as alanine and cysteine, to avoid such errors it has two additional distinct editing activities against alanine. One activity is designated as 'pretransfer' editing and involves the tRNA(Pro)-independent hydrolysis of activated Ala-AMP. The other activity is designated 'posttransfer' editing and involves deacylation of mischarged Ala-tRNA(Pro). The misacylated Cys-tRNA(Pro) is not edited by ProRS. The chain is Proline--tRNA ligase from Pseudomonas putida (strain ATCC 700007 / DSM 6899 / JCM 31910 / BCRC 17059 / LMG 24140 / F1).